The following is a 431-amino-acid chain: Trigger factor (431 aa).

One can recognise a PPIase FKBP-type domain in the interval 165 to 250 (GDTVVIDFDG…IHELKRKELP (86 aa)).

Belongs to the FKBP-type PPIase family. Tig subfamily.

The protein resides in the cytoplasm. It catalyses the reaction [protein]-peptidylproline (omega=180) = [protein]-peptidylproline (omega=0). Functionally, involved in protein export. Acts as a chaperone by maintaining the newly synthesized protein in an open conformation. Functions as a peptidyl-prolyl cis-trans isomerase. The chain is Trigger factor from Leuconostoc citreum (strain KM20).